We begin with the raw amino-acid sequence, 265 residues long: Mlc titration factor A (265 aa).

4 residues coordinate Zn(2+): His-111, His-148, His-152, and Glu-211.

The protein belongs to the MtfA family. Interacts with Mlc. Zn(2+) is required as a cofactor.

It is found in the cytoplasm. Functionally, involved in the modulation of the activity of the glucose-phosphotransferase system (glucose-PTS). Interacts with the transcriptional repressor Mlc, preventing its interaction with DNA and leading to the modulation of expression of genes regulated by Mlc, including ptsG, which encodes the PTS system glucose-specific EIICB component. Shows zinc-dependent metallopeptidase activity. The sequence is that of Mlc titration factor A from Escherichia coli O6:K15:H31 (strain 536 / UPEC).